A 148-amino-acid chain; its full sequence is SsrA-binding protein (148 aa).

Residues 123 to 148 are disordered; sequence KLHDKRETEKKRDWEREKARIMRSAT. The span at 126-142 shows a compositional bias: basic and acidic residues; sequence DKRETEKKRDWEREKAR.

It belongs to the SmpB family.

It is found in the cytoplasm. In terms of biological role, required for rescue of stalled ribosomes mediated by trans-translation. Binds to transfer-messenger RNA (tmRNA), required for stable association of tmRNA with ribosomes. tmRNA and SmpB together mimic tRNA shape, replacing the anticodon stem-loop with SmpB. tmRNA is encoded by the ssrA gene; the 2 termini fold to resemble tRNA(Ala) and it encodes a 'tag peptide', a short internal open reading frame. During trans-translation Ala-aminoacylated tmRNA acts like a tRNA, entering the A-site of stalled ribosomes, displacing the stalled mRNA. The ribosome then switches to translate the ORF on the tmRNA; the nascent peptide is terminated with the 'tag peptide' encoded by the tmRNA and targeted for degradation. The ribosome is freed to recommence translation, which seems to be the essential function of trans-translation. This Burkholderia thailandensis (strain ATCC 700388 / DSM 13276 / CCUG 48851 / CIP 106301 / E264) protein is SsrA-binding protein.